The sequence spans 517 residues: MTAATEQKEKTGTDNVGRVVRVTGPVVDVEFPRGSVPELFNALHAEISYKDLAKTLTLEVAQHLGDSLVRCISMQPTDGLVRGVDVTDTGASISVPVGEGVKGHVFNALGACLDDPGYGKDFEKWSIHRKPPAFDELEPRTEMLETGLKVVDLLTPYVRGGKIALFGGAGVGKTVLIQEMINRIARNFGGTSVFAGVGERTREGNDLWVELADANVLKDTALVFGQMDEPPGTRMRVALSALTMAEYFRDEKQQDVLLFIDNIFRFTQAGSEVSTLLGRMPSAVGYQPTLADEMGELQERITSTRGRSITSMQAVYVPADDYTDPAPATTFAHLDATTELSRSVFSKGIFPAVDPLASSSTILDPSVVGDEHYRVAQEVIRILQRYKDLQDIIAILGIDELAEEDKQLVQRARRIERFLSQNMMAAEQFTGQPGSTVPLKETIEAFDKLSKGDFDHLPEQAFFLIGGLEDLQRKAESMGAKMDDGGSDGAPPPSDSKDKGKGDSKADDKGDDADKDA.

167–174 serves as a coordination point for ATP; sequence GGAGVGKT. Basic and acidic residues-rich tracts occupy residues 475–484 and 495–508; these read AESMGAKMDD and DSKD…KADD. The segment at 475 to 517 is disordered; sequence AESMGAKMDDGGSDGAPPPSDSKDKGKGDSKADDKGDDADKDA.

It belongs to the ATPase alpha/beta chains family. In terms of assembly, F-type ATPases have 2 components, CF(1) - the catalytic core - and CF(0) - the membrane proton channel. CF(1) has five subunits: alpha(3), beta(3), gamma(1), delta(1), epsilon(1). CF(0) has three main subunits: a(1), b(2) and c(9-12). The alpha and beta chains form an alternating ring which encloses part of the gamma chain. CF(1) is attached to CF(0) by a central stalk formed by the gamma and epsilon chains, while a peripheral stalk is formed by the delta and b chains.

The protein resides in the cell membrane. It catalyses the reaction ATP + H2O + 4 H(+)(in) = ADP + phosphate + 5 H(+)(out). Its function is as follows. Produces ATP from ADP in the presence of a proton gradient across the membrane. The catalytic sites are hosted primarily by the beta subunits. This is ATP synthase subunit beta from Mycobacterium sp. (strain JLS).